Consider the following 411-residue polypeptide: TGTYRGDSETQLERVNVYYNEASCGRYVPRAVLMDLEPGTMDSVRSGPYGQIFRPDNFVFGQSGAGNNWAKGHYTEGAELIDSVLDVVRKEAENCDCLQGFQVCHSLGGGTGSGMGTLLISKIREEYPDRMMXTFSVFPSPKVSDTVVEPYNATLSVHQLVENADECMVLDNEALYDICFRTLKLVTPTFGDLNHLISATMSGVTCCLRFPGQLNSDLRKLAVNLIPFPRLHFFMVGFAPLTSRGSQQYRALTVPELTQQMRDAKNMMCAADPRHGRYLTASAMFRGKMSTKEVDEQMINVQNKNSSYFVEWIPNNVKSSVCDIPPVGLKMACTFIGNSTSIQEMFRRVRDQFTAMFRXKAFLHWYTGEGMDEMEFTEAESNMNDLVSEYQQYQDATAEPEGXYEEDYDEA.

GTP-binding residues include Glu37, Ser106, Gly110, Thr111, Gly112, Asn172, and Asn194. A Mg(2+)-binding site is contributed by Glu37. The segment at 392–411 (QYQDATAEPEGXYEEDYDEA) is disordered. Positions 402–411 (GXYEEDYDEA) are enriched in acidic residues.

This sequence belongs to the tubulin family. Dimer of alpha and beta chains. A typical microtubule is a hollow water-filled tube with an outer diameter of 25 nm and an inner diameter of 15 nM. Alpha-beta heterodimers associate head-to-tail to form protofilaments running lengthwise along the microtubule wall with the beta-tubulin subunit facing the microtubule plus end conferring a structural polarity. Microtubules usually have 13 protofilaments but different protofilament numbers can be found in some organisms and specialized cells. Mg(2+) serves as cofactor.

The protein resides in the cytoplasm. It is found in the cytoskeleton. Its function is as follows. Tubulin is the major constituent of microtubules, a cylinder consisting of laterally associated linear protofilaments composed of alpha- and beta-tubulin heterodimers. Microtubules grow by the addition of GTP-tubulin dimers to the microtubule end, where a stabilizing cap forms. Below the cap, tubulin dimers are in GDP-bound state, owing to GTPase activity of alpha-tubulin. The sequence is that of Tubulin beta-2 chain (TUBB2) from Anemia phyllitidis (Fern).